We begin with the raw amino-acid sequence, 435 residues long: Serine--tRNA ligase (435 aa).

242-244 (TAE) is a binding site for L-serine. ATP is bound at residue 273–275 (RSE). Glutamate 296 serves as a coordination point for L-serine. Residue 360-363 (EISS) coordinates ATP. Position 396 (serine 396) interacts with L-serine.

The protein belongs to the class-II aminoacyl-tRNA synthetase family. Type-1 seryl-tRNA synthetase subfamily. Homodimer. The tRNA molecule binds across the dimer.

The protein localises to the cytoplasm. It carries out the reaction tRNA(Ser) + L-serine + ATP = L-seryl-tRNA(Ser) + AMP + diphosphate + H(+). The enzyme catalyses tRNA(Sec) + L-serine + ATP = L-seryl-tRNA(Sec) + AMP + diphosphate + H(+). Its pathway is aminoacyl-tRNA biosynthesis; selenocysteinyl-tRNA(Sec) biosynthesis; L-seryl-tRNA(Sec) from L-serine and tRNA(Sec): step 1/1. In terms of biological role, catalyzes the attachment of serine to tRNA(Ser). Is also able to aminoacylate tRNA(Sec) with serine, to form the misacylated tRNA L-seryl-tRNA(Sec), which will be further converted into selenocysteinyl-tRNA(Sec). This Vibrio campbellii (strain ATCC BAA-1116) protein is Serine--tRNA ligase.